The sequence spans 352 residues: Holliday junction branch migration complex subunit RuvB (352 aa).

The tract at residues 4-191 is large ATPase domain (RuvB-L); it reads TDKLAAPARV…FGIVARLEFY (188 aa). ATP is bound by residues L30, R31, G72, K75, T76, T77, 138 to 140, R181, Y191, and R228; that span reads EDY. T76 contacts Mg(2+). The small ATPAse domain (RuvB-S) stretch occupies residues 192–262; the sequence is TADELARIVT…MADAALAMLD (71 aa). The interval 265 to 352 is head domain (RuvB-H); sequence SVGFDLMDRK…SGASELFGDA (88 aa). Residues R301, R320, and R325 each coordinate DNA.

This sequence belongs to the RuvB family. Homohexamer. Forms an RuvA(8)-RuvB(12)-Holliday junction (HJ) complex. HJ DNA is sandwiched between 2 RuvA tetramers; dsDNA enters through RuvA and exits via RuvB. An RuvB hexamer assembles on each DNA strand where it exits the tetramer. Each RuvB hexamer is contacted by two RuvA subunits (via domain III) on 2 adjacent RuvB subunits; this complex drives branch migration. In the full resolvosome a probable DNA-RuvA(4)-RuvB(12)-RuvC(2) complex forms which resolves the HJ.

The protein localises to the cytoplasm. The enzyme catalyses ATP + H2O = ADP + phosphate + H(+). The RuvA-RuvB-RuvC complex processes Holliday junction (HJ) DNA during genetic recombination and DNA repair, while the RuvA-RuvB complex plays an important role in the rescue of blocked DNA replication forks via replication fork reversal (RFR). RuvA specifically binds to HJ cruciform DNA, conferring on it an open structure. The RuvB hexamer acts as an ATP-dependent pump, pulling dsDNA into and through the RuvAB complex. RuvB forms 2 homohexamers on either side of HJ DNA bound by 1 or 2 RuvA tetramers; 4 subunits per hexamer contact DNA at a time. Coordinated motions by a converter formed by DNA-disengaged RuvB subunits stimulates ATP hydrolysis and nucleotide exchange. Immobilization of the converter enables RuvB to convert the ATP-contained energy into a lever motion, pulling 2 nucleotides of DNA out of the RuvA tetramer per ATP hydrolyzed, thus driving DNA branch migration. The RuvB motors rotate together with the DNA substrate, which together with the progressing nucleotide cycle form the mechanistic basis for DNA recombination by continuous HJ branch migration. Branch migration allows RuvC to scan DNA until it finds its consensus sequence, where it cleaves and resolves cruciform DNA. The sequence is that of Holliday junction branch migration complex subunit RuvB from Cupriavidus necator (strain ATCC 17699 / DSM 428 / KCTC 22496 / NCIMB 10442 / H16 / Stanier 337) (Ralstonia eutropha).